A 99-amino-acid polypeptide reads, in one-letter code: A-type ATP synthase subunit F (99 aa).

The protein belongs to the V-ATPase F subunit family. Has multiple subunits with at least A(3), B(3), C, D, E, F, H, I and proteolipid K(x).

It is found in the cell membrane. Its function is as follows. Component of the A-type ATP synthase that produces ATP from ADP in the presence of a proton gradient across the membrane. This is A-type ATP synthase subunit F from Methanococcus maripaludis (strain C5 / ATCC BAA-1333).